Consider the following 730-residue polypeptide: Semaphorin-1A (730 aa).

Positions 1-20 are cleaved as a signal peptide; it reads MRAALVAVAALLWVALHAAA. The Extracellular segment spans residues 21-630; it reads WVNDVSPKMY…LPIYTAETLT (610 aa). A Sema domain is found at 28-490; it reads KMYVQFGEER…SDDEILAIKL (463 aa). N-linked (GlcNAc...) asparagine glycans are attached at residues asparagine 44 and asparagine 71. Cystine bridges form between cysteine 97–cysteine 107 and cysteine 125–cysteine 134. Residues asparagine 163 and asparagine 267 are each glycosylated (N-linked (GlcNAc...) asparagine). 2 cysteine pairs are disulfide-bonded: cysteine 244–cysteine 358 and cysteine 268–cysteine 317. N-linked (GlcNAc...) asparagine glycosylation occurs at asparagine 360. 2 disulfide bridges follow: cysteine 493/cysteine 512 and cysteine 504/cysteine 521. Asparagine 539 carries N-linked (GlcNAc...) asparagine glycosylation. A helical transmembrane segment spans residues 631–651; the sequence is IAIVTSCLGALVVGFISGFLF. The Cytoplasmic segment spans residues 652–730; it reads SRRCRGEDYT…PIQKVKKTYI (79 aa). The span at 708–720 shows a compositional bias: low complexity; sequence ANGKNANSSAENK. Residues 708-730 are disordered; sequence ANGKNANSSAENKPIQKVKKTYI.

This sequence belongs to the semaphorin family. In terms of tissue distribution, dynamically expressed on a subset of axon pathways in the developing CNS and on circumferential bands of epithelial cells in developing limb buds.

Its subcellular location is the membrane. Functionally, plays a role in growth cones guidance. The polypeptide is Semaphorin-1A (SEMA-1A) (Schistocerca americana (American grasshopper)).